The following is a 159-amino-acid chain: 2-amino-4-hydroxy-6-hydroxymethyldihydropteridine pyrophosphokinase (159 aa).

This sequence belongs to the HPPK family. Monomer.

It catalyses the reaction 6-hydroxymethyl-7,8-dihydropterin + ATP = (7,8-dihydropterin-6-yl)methyl diphosphate + AMP + H(+). It participates in cofactor biosynthesis; tetrahydrofolate biosynthesis; 2-amino-4-hydroxy-6-hydroxymethyl-7,8-dihydropteridine diphosphate from 7,8-dihydroneopterin triphosphate: step 4/4. Its function is as follows. Catalyzes the transfer of pyrophosphate from adenosine triphosphate (ATP) to 6-hydroxymethyl-7,8-dihydropterin, an enzymatic step in folate biosynthesis pathway. The sequence is that of 2-amino-4-hydroxy-6-hydroxymethyldihydropteridine pyrophosphokinase (folK) from Escherichia coli (strain K12).